The primary structure comprises 334 residues: DNA polymerase beta (334 aa).

The K(+) site is built by K60, L62, and V65. The Na(+) site is built by K60, L62, and V65. The active-site Nucleophile; Schiff-base intermediate with DNA; for 5'-dRP lyase activity is the K72. Position 83 is an omega-N-methylarginine; by PRMT6 (R83). Positions 101, 103, and 106 each coordinate K(+). Na(+)-binding residues include T101, V103, and I106. A 2'-deoxyribonucleoside 5'-triphosphate is bound at residue R149. R152 bears the Omega-N-methylarginine; by PRMT6 mark. 4 residues coordinate a 2'-deoxyribonucleoside 5'-triphosphate: S180, R183, G189, and D190. The tract at residues 183–192 is DNA-binding; it reads RGAESSGDMD. The Mg(2+) site is built by D190, D192, and D255.

It belongs to the DNA polymerase type-X family. In terms of assembly, monomer. Mg(2+) serves as cofactor. Post-translationally, methylation by PRMT6 stimulates the polymerase activity by enhancing DNA binding and processivity. In terms of processing, ubiquitinated: monoubiquitinated by huwe1/arf-bp1. Monoubiquitinated protein is then the target of stub1/chip, which catalyzes polyubiquitination from monoubiquitin, leading to degradation by the proteasome. usp47 mediates the deubiquitination of monoubiquitinated protein, preventing polyubiquitination by STUB1/CHIP and its subsequent degradation.

The protein localises to the nucleus. Its subcellular location is the cytoplasm. The enzyme catalyses DNA(n) + a 2'-deoxyribonucleoside 5'-triphosphate = DNA(n+1) + diphosphate. It catalyses the reaction a 5'-end 2'-deoxyribose-2'-deoxyribonucleotide-DNA = (2E,4S)-4-hydroxypenten-2-al-5-phosphate + a 5'-end 5'-phospho-2'-deoxyribonucleoside-DNA + H(+). It carries out the reaction 2'-deoxyribonucleotide-(2'-deoxyribose 5'-phosphate)-2'-deoxyribonucleotide-DNA = a 3'-end 2'-deoxyribonucleotide-(2,3-dehydro-2,3-deoxyribose 5'-phosphate)-DNA + a 5'-end 5'-phospho-2'-deoxyribonucleoside-DNA + H(+). Its function is as follows. Repair polymerase that plays a key role in base-excision repair. During this process, the damaged base is excised by specific DNA glycosylases, the DNA backbone is nicked at the abasic site by an apurinic/apyrimidic (AP) endonuclease, and POLB removes 5'-deoxyribose-phosphate from the preincised AP site acting as a 5'-deoxyribose-phosphate lyase (5'-dRP lyase); through its DNA polymerase activity, it adds one nucleotide to the 3' end of the arising single-nucleotide gap. Conducts 'gap-filling' DNA synthesis in a stepwise distributive fashion rather than in a processive fashion as for other DNA polymerases. It is also able to cleave sugar-phosphate bonds 3' to an intact AP site, acting as an AP lyase. This Xenopus laevis (African clawed frog) protein is DNA polymerase beta (polb).